The following is a 249-amino-acid chain: Indole-3-glycerol phosphate synthase (249 aa).

This sequence belongs to the TrpC family.

The catalysed reaction is 1-(2-carboxyphenylamino)-1-deoxy-D-ribulose 5-phosphate + H(+) = (1S,2R)-1-C-(indol-3-yl)glycerol 3-phosphate + CO2 + H2O. It functions in the pathway amino-acid biosynthesis; L-tryptophan biosynthesis; L-tryptophan from chorismate: step 4/5. This chain is Indole-3-glycerol phosphate synthase, found in Pyrobaculum aerophilum (strain ATCC 51768 / DSM 7523 / JCM 9630 / CIP 104966 / NBRC 100827 / IM2).